Consider the following 577-residue polypeptide: 9-cis-epoxycarotenoid dioxygenase NCED6, chloroplastic (577 aa).

The segment at 1–25 is disordered; it reads MQHSLRSDLLPTKTSPRSHLLPQPK. Residues His-276, His-325, His-390, and His-563 each coordinate Fe cation.

The protein belongs to the carotenoid oxygenase family. The cofactor is Fe(2+). As to expression, expressed before fertilization in male and female gametophytes, and then immediately after pollination, restricted to seed endosperm.

It localises to the plastid. Its subcellular location is the chloroplast stroma. It carries out the reaction a 9-cis-epoxycarotenoid + O2 = a 12'-apo-carotenal + 2-cis,4-trans-xanthoxin. It catalyses the reaction 9-cis-violaxanthin + O2 = (3S,5R,6S)-5,6-epoxy-3-hydroxy-5,6-dihydro-12'-apo-beta-caroten-12'-al + 2-cis,4-trans-xanthoxin. The catalysed reaction is 9'-cis-neoxanthin + O2 = (3S,5R,6R)-3,5-dihydroxy-6,7-didehydro-5,6-dihydro-12'-apo-beta-caroten-12'-al + 2-cis,4-trans-xanthoxin. Its function is as follows. Has a 11,12(11',12') 9-cis epoxycarotenoid cleavage activity. Catalyzes the first step of abscisic-acid biosynthesis from carotenoids. Contributes probably to abscisic acid synthesis for the induction of seed dormancy. The chain is 9-cis-epoxycarotenoid dioxygenase NCED6, chloroplastic (NCED6) from Arabidopsis thaliana (Mouse-ear cress).